The primary structure comprises 316 residues: Olfactory receptor 4N4 (316 aa).

Residues 1–25 are Extracellular-facing; the sequence is MKIANNTVVTEFILLGLTQSQDIQL. A glycan (N-linked (GlcNAc...) asparagine) is linked at N5. The chain crosses the membrane as a helical span at residues 26 to 49; that stretch reads LVFVLILIFYLIILPGNFLIIFTI. Over 50–57 the chain is Cytoplasmic; sequence RSDPGLTA. A helical transmembrane segment spans residues 58–79; sequence PLYLFLGNLAFLDASYSFIVAP. The Extracellular portion of the chain corresponds to 80-100; sequence RMLVDFLSEKKVISYRGCITQ. Cysteines 97 and 189 form a disulfide. Residues 101 to 120 traverse the membrane as a helical segment; that stretch reads LFFLHFLGGGEGLLLVVMAF. Over 121-139 the chain is Cytoplasmic; sequence DRYIAICRPLHCSTVMNPR. Residues 140-158 traverse the membrane as a helical segment; that stretch reads ACYAMMLALWLGGFVHSII. Over 159-195 the chain is Extracellular; that stretch reads QVVLILRLPFCGPNQLDNFFCDVRQVIKLACTDMFVV. A helical transmembrane segment spans residues 196–219; that stretch reads ELLMVFNSGLMTLLCFLGLLASYA. Residues 220–235 lie on the Cytoplasmic side of the membrane; that stretch reads VILCHVRRAASEGKNK. Residues 236-258 form a helical membrane-spanning segment; sequence AMSTCTTRVIIILLMFGPAIFIY. The Extracellular segment spans residues 259-269; that stretch reads MCPFRALPADK. Residues 270–289 form a helical membrane-spanning segment; it reads MVSLFHTVIFPLMNPMIYTL. The Cytoplasmic segment spans residues 290–316; that stretch reads RNQEVKTSMKRLLSRHVVCQVDFIIRN.

Belongs to the G-protein coupled receptor 1 family.

It is found in the cell membrane. Odorant receptor. The chain is Olfactory receptor 4N4 (OR4N4) from Homo sapiens (Human).